The chain runs to 497 residues: Aldehyde dehydrogenase (497 aa).

241–246 (GSTLVG) is an NAD(+) binding site. Glutamate 264 acts as the Proton acceptor in catalysis. Cysteine 298 serves as the catalytic Nucleophile.

This sequence belongs to the aldehyde dehydrogenase family.

It carries out the reaction an aldehyde + NAD(+) + H2O = a carboxylate + NADH + 2 H(+). Its pathway is alcohol metabolism; ethanol degradation; acetate from ethanol: step 2/2. The polypeptide is Aldehyde dehydrogenase (aldA) (Emericella nidulans (strain FGSC A4 / ATCC 38163 / CBS 112.46 / NRRL 194 / M139) (Aspergillus nidulans)).